The following is a 703-amino-acid chain: Meiotic coiled-coil protein 2 (703 aa).

2 stretches are compositionally biased toward polar residues: residues 1-19 and 245-258; these read MQSI…SISE and TNVR…STPL. Disordered stretches follow at residues 1 to 29, 245 to 265, and 284 to 309; these read MQSI…SELN, TNVR…DVDL, and ASTN…RSSS. Residues 331-686 enclose the PUM-HD domain; that stretch reads NPSVIPESTS…KVAYLVEKWN (356 aa). Pumilio repeat units lie at residues 361 to 396, 397 to 432, 433 to 468, 469 to 504, 509 to 544, 545 to 580, 581 to 616, and 625 to 660; these read NVII…NIVD, SIIS…QMGS, AMLG…AMMD, ELFL…NVMN, ALRG…ECIE, EIIF…RVID, ALLN…LYLK, and RTRQ…LVIT.

This is Meiotic coiled-coil protein 2 (mcp2) from Schizosaccharomyces pombe (strain 972 / ATCC 24843) (Fission yeast).